Here is a 511-residue protein sequence, read N- to C-terminus: 2,3-bisphosphoglycerate-independent phosphoglycerate mutase (511 aa).

The Mn(2+) site is built by D12 and S62. The active-site Phosphoserine intermediate is S62. Residues H123, 153-154, R185, R191, 260-263, and K333 each bind substrate; these read RD and RPDR. Positions 400, 404, 441, 442, and 460 each coordinate Mn(2+).

The protein belongs to the BPG-independent phosphoglycerate mutase family. Monomer. Mn(2+) is required as a cofactor.

It catalyses the reaction (2R)-2-phosphoglycerate = (2R)-3-phosphoglycerate. It participates in carbohydrate degradation; glycolysis; pyruvate from D-glyceraldehyde 3-phosphate: step 3/5. In terms of biological role, catalyzes the interconversion of 2-phosphoglycerate and 3-phosphoglycerate. The protein is 2,3-bisphosphoglycerate-independent phosphoglycerate mutase of Clostridium novyi (strain NT).